Consider the following 100-residue polypeptide: NADH-quinone oxidoreductase subunit K 1 (100 aa).

Helical transmembrane passes span Ile-3–Ile-23, Leu-28–Ala-48, and Ile-60–Ile-80.

Belongs to the complex I subunit 4L family. NDH-1 is composed of 14 different subunits. Subunits NuoA, H, J, K, L, M, N constitute the membrane sector of the complex.

The protein localises to the cell inner membrane. It carries out the reaction a quinone + NADH + 5 H(+)(in) = a quinol + NAD(+) + 4 H(+)(out). Its function is as follows. NDH-1 shuttles electrons from NADH, via FMN and iron-sulfur (Fe-S) centers, to quinones in the respiratory chain. The immediate electron acceptor for the enzyme in this species is believed to be ubiquinone. Couples the redox reaction to proton translocation (for every two electrons transferred, four hydrogen ions are translocated across the cytoplasmic membrane), and thus conserves the redox energy in a proton gradient. In Aquifex aeolicus (strain VF5), this protein is NADH-quinone oxidoreductase subunit K 1.